Here is a 370-residue protein sequence, read N- to C-terminus: Tyrosyl-DNA phosphodiesterase 2 (370 aa).

Residue Met1 is modified to N-acetylmethionine. The disordered stretch occupies residues 1 to 32; sequence MASGSSSDAAEPAGPAGRAASAPEAAQAEEDR. Residues 9–26 show a composition bias toward low complexity; that stretch reads AAEPAGPAGRAASAPEAA. Residue Lys34 forms a Glycyl lysine isopeptide (Lys-Gly) (interchain with G-Cter in SUMO2) linkage. Position 99 is a phosphothreonine; by ACVR1B (Thr99). Residues 130–134 form an interaction with 5' end of substrate DNA region; it reads NIDGL. Mg(2+) contacts are provided by Asp132 and Glu162. An interaction with 5' end of substrate DNA region spans residues 236-241; sequence HLESTR. Catalysis depends on Asp272, which acts as the Proton donor/acceptor. 2 interaction with 5' end of substrate DNA regions span residues 274–276 and 315–321; these read NLR and LRIPAAY.

The protein belongs to the CCR4/nocturin family. As to quaternary structure, interacts with TRAF2, TRAF3, TRAF5, TRAF6, TNFRSF8/CD30, TNFRSF5/CD40, TNFRSF1B/TNF-R75, ETS1, ETS2, FLI1, SMAD3 and ACVR1B/ALK4. Mg(2+) serves as cofactor. The cofactor is Mn(2+). Post-translationally, ubiquitinated by TRAF6. Widely expressed. Expressed in whole brain, cerebellum, quiescent cortical astrocytes and cerebellar granule neurons.

The protein localises to the nucleus. It is found in the PML body. The protein resides in the nucleolus. It localises to the cytoplasm. Its function is as follows. DNA repair enzyme that can remove a variety of covalent adducts from DNA through hydrolysis of a 5'-phosphodiester bond, giving rise to DNA with a free 5' phosphate. Catalyzes the hydrolysis of dead-end complexes between DNA and the topoisomerase 2 (TOP2) active site tyrosine residue. The 5'-tyrosyl DNA phosphodiesterase activity can enable the repair of TOP2-induced DNA double-strand breaks/DSBs without the need for nuclease activity, creating a 'clean' DSB with 5'-phosphate termini that are ready for ligation. Thereby, protects the transcription of many genes involved in neurological development and maintenance from the abortive activity of TOP2. Hydrolyzes 5'-phosphoglycolates on protruding 5' ends on DSBs due to DNA damage by radiation and free radicals. Has preference for single-stranded DNA or duplex DNA with a 4 base pair overhang as substrate. Also has 3'-tyrosyl DNA phosphodiesterase activity, but less efficiently and much slower than TDP1. Constitutes the major if not only 5'-tyrosyl-DNA phosphodiesterase in cells. Also acts as an adapter by participating in the specific activation of MAP3K7/TAK1 in response to TGF-beta: associates with components of the TGF-beta receptor-TRAF6-TAK1 signaling module and promotes their ubiquitination dependent complex formation. Involved in non-canonical TGF-beta induced signaling routes. May also act as a negative regulator of ETS1 and may inhibit NF-kappa-B activation. Acts as a regulator of ribosome biogenesis following stress. The sequence is that of Tyrosyl-DNA phosphodiesterase 2 (Tdp2) from Mus musculus (Mouse).